The following is a 456-amino-acid chain: RUN domain-containing protein 3B (456 aa).

The segment at 1 to 24 (MASRSLGGLSGIRGGGGGGGKKSL) is disordered. Over residues 8–21 (GLSGIRGGGGGGGK) the composition is skewed to gly residues. Arg-13 carries the omega-N-methylarginine modification. The RUN domain maps to 57–189 (DDSSPEFNNF…IDFSFCLKGE (133 aa)). Phosphoserine occurs at positions 215 and 216. Residues 216–237 (SDEEELRTLGSSGSESSTPENV) are disordered. Positions 224-235 (LGSSGSESSTPE) are enriched in polar residues. Residues 300–325 (AHKLEKEQLEYIIVELQDQLTVLKNN) adopt a coiled-coil conformation. The span at 382 to 405 (SLSQTSLDPGQSQEGDGKQDTLNV) shows a compositional bias: polar residues. The tract at residues 382-411 (SLSQTSLDPGQSQEGDGKQDTLNVMSEGKE) is disordered.

It belongs to the RUNDC3 family. As to quaternary structure, interacts with RAP2A.

The protein is RUN domain-containing protein 3B (RUNDC3B) of Pongo abelii (Sumatran orangutan).